The following is a 375-amino-acid chain: Neuropeptide Y receptor type 4 (375 aa).

Over 1-39 the chain is Extracellular; it reads MNTSHFLAPLFPGSLQGKNGTNPLDSPYNFSDGCQDSAE. N-linked (GlcNAc...) asparagine glycosylation is found at asparagine 2, asparagine 19, and asparagine 29. The helical transmembrane segment at 40 to 60 threads the bilayer; it reads LLAFIITTYSIETILGVLGNL. Residues 61–78 lie on the Cytoplasmic side of the membrane; the sequence is CLIFVTTRQKEKSNVTNL. Residues 79 to 99 form a helical membrane-spanning segment; sequence LIANLAFSDFLMCLICQPLTV. Topologically, residues 100–116 are extracellular; that stretch reads TYTIMDYWIFGEVLCKM. Cysteine 114 and cysteine 201 form a disulfide bridge. A helical transmembrane segment spans residues 117–137; it reads LTFIQCMSVTVSILSLVLVAL. At 138–155 the chain is on the cytoplasmic side; it reads ERHQLIINPTGWKPSIFQ. Residues 156–176 form a helical membrane-spanning segment; it reads AYLGIVVIWFVSCFLSLPFLA. The Extracellular portion of the chain corresponds to 177-211; sequence NSTLNDLFHYNHSKVVEFLEDKVVCFVSWSSDHHR. A glycan (N-linked (GlcNAc...) asparagine) is linked at asparagine 187. A helical membrane pass occupies residues 212–232; that stretch reads LIYTTFLLLFQYCIPLAFILV. Residues 233 to 266 are Cytoplasmic-facing; it reads CYIRIYQRLQRQKHVFHAHACSSRAGQMKRINSM. The chain crosses the membrane as a helical span at residues 267 to 287; sequence LMTMVTAFAVLWLPLHVFNTL. Residues 288–301 are Extracellular-facing; that stretch reads EDWYQEAIPACHGN. Residues 302-322 traverse the membrane as a helical segment; it reads LIFLMCHLLAMASTCVNPFIY. Residues 323-375 are Cytoplasmic-facing; that stretch reads GFLNINFKKDIKALVLTCHCRSPRGESEHLPLSTVHTDLSKGSMRMGSKSNFI. The S-palmitoyl cysteine moiety is linked to residue cysteine 340.

This sequence belongs to the G-protein coupled receptor 1 family. As to expression, heart, detected in small intestine.

The protein localises to the cell membrane. Functionally, g protein-coupled receptor for PPY/pancreatic polypeptide/PP that is negatively coupled to cAMP. Has much lower affinity for the NPY/neuropeptide Y and PYY/peptide YY. The sequence is that of Neuropeptide Y receptor type 4 (Npy4r) from Mus musculus (Mouse).